The following is a 410-amino-acid chain: MSSKEKKSVTILTESQLSSRAFKDEAYEFYKELRKSQALYPLSLGALGKGWLISRYDDAIHLLKNEKLKKNYENVFTAKEKRPALLKNEETLTKHMLNSDPPDHNRLRTLVQKAFTHRMILQLEDKIQHIADSLLDKVQPNKFMNLVDDYAFPLPIIVISEMLGIPLEDRQKFRVWSQAIIDFSDAPERLQENDHLLGEFVEYLESLVRKKRREPAGDLISALIQAESEGTQLSTEELYSMIMLLIVAGHETTVNLITNMTYALMCHHDQLEKLRQQPDLMNSAIEEALRFHSPVELTTIRWTAEPFILHGQEIKRKDVIIISLASANRDEKIFPNADIFDIERKNNRHIAFGHGNHFCLGAQLARLEAKIAISTLLRRCPNIQLKGEKKQMKWKGNFLMRALEELPISF.

A heme-binding site is contributed by C359.

The protein belongs to the cytochrome P450 family. Heme serves as cofactor.

This chain is Cytochrome P450 (cypA), found in Bacillus subtilis (strain 168).